Reading from the N-terminus, the 260-residue chain is CD40 ligand (260 aa).

Residues 1–22 (MIETYSQPSPRSVATGLPASMK) are Cytoplasmic-facing. A helical; Signal-anchor for type II membrane protein membrane pass occupies residues 23-46 (IFMYLLTVFLITQMIGSVLFAVYL). Residues 47–260 (HRRLDKVEEE…GFSSFGLLKL (214 aa)) lie on the Extracellular side of the membrane. The THD domain occupies 121-260 (IAAHVVSEAN…GFSSFGLLKL (140 aa)). A disulfide bridge links cysteine 177 with cysteine 217. Residue asparagine 239 is glycosylated (N-linked (GlcNAc...) asparagine).

Belongs to the tumor necrosis factor family. In terms of assembly, homotrimer. Interacts with CD28. CD40 ligand, soluble form: Exists as either a monomer or a homotrimer. Forms a ternary complex between CD40 and integrins for CD40-CD40LG signaling. Post-translationally, the soluble form derives from the membrane form by proteolytic processing. Specifically expressed on activated CD4+ T-lymphocytes.

It localises to the cell membrane. The protein resides in the cell surface. It is found in the secreted. Its function is as follows. Cytokine that acts as a ligand to CD40/TNFRSF5. Costimulates T-cell proliferation and cytokine production. Its cross-linking on T-cells generates a costimulatory signal which enhances the production of IL4 and IL10 in conjunction with the TCR/CD3 ligation and CD28 costimulation. Induces the activation of NF-kappa-B. Induces the activation of kinases MAPK8 and PAK2 in T-cells. Mediates B-cell proliferation in the absence of co-stimulus as well as IgE production in the presence of IL4. Involved in immunoglobulin class switching. Acts as a ligand for integrins, specifically ITGA5:ITGB1 and ITGAV:ITGB3; both integrins and the CD40 receptor are required for activation of CD40-CD40LG signaling, which have cell-type dependent effects, such as B-cell activation, NF-kappa-B signaling and anti-apoptotic signaling. This chain is CD40 ligand (Cd40lg), found in Mus musculus (Mouse).